A 124-amino-acid chain; its full sequence is Holo-[acyl-carrier-protein] synthase (124 aa).

Aspartate 5 and glutamate 56 together coordinate Mg(2+).

It belongs to the P-Pant transferase superfamily. AcpS family. The cofactor is Mg(2+).

It is found in the cytoplasm. It catalyses the reaction apo-[ACP] + CoA = holo-[ACP] + adenosine 3',5'-bisphosphate + H(+). Functionally, transfers the 4'-phosphopantetheine moiety from coenzyme A to a Ser of acyl-carrier-protein. The polypeptide is Holo-[acyl-carrier-protein] synthase (Campylobacter hominis (strain ATCC BAA-381 / DSM 21671 / CCUG 45161 / LMG 19568 / NCTC 13146 / CH001A)).